The chain runs to 328 residues: Glyoxylate reductase/hydroxypyruvate reductase (328 aa).

Phosphoserine is present on S36. Residue 83 to 84 coordinates substrate; the sequence is VG. Residues 162 to 164, 185 to 188, S217, and I243 each bind NADP(+); these read GRI and RQPR. Substrate is bound by residues R245 and D269. At S272 the chain carries Phosphoserine. The Proton donor role is filled by H293. 293 to 296 is a binding site for substrate; sequence HIGS. G295 serves as a coordination point for NADP(+). T298 carries the phosphothreonine modification.

It belongs to the D-isomer specific 2-hydroxyacid dehydrogenase family. As to quaternary structure, homodimer. In terms of tissue distribution, ubiquitous. Most abundantly expressed in the liver.

The catalysed reaction is glycolate + NADP(+) = glyoxylate + NADPH + H(+). It carries out the reaction (R)-glycerate + NAD(+) = 3-hydroxypyruvate + NADH + H(+). It catalyses the reaction (R)-glycerate + NADP(+) = 3-hydroxypyruvate + NADPH + H(+). In terms of biological role, enzyme with hydroxy-pyruvate reductase, glyoxylate reductase and D-glycerate dehydrogenase enzymatic activities. Reduces hydroxypyruvate to D-glycerate, glyoxylate to glycolate, oxidizes D-glycerate to hydroxypyruvate. The sequence is that of Glyoxylate reductase/hydroxypyruvate reductase (GRHPR) from Homo sapiens (Human).